The following is a 681-amino-acid chain: Cadmium, zinc and cobalt-transporting ATPase (681 aa).

The region spanning methionine 1–glutamine 66 is the HMA domain. Residues methionine 1 to lysine 72 are Cytoplasmic-facing. Cd(2+) is bound by residues cysteine 11 and cysteine 14. Co(2+) is bound by residues cysteine 11 and cysteine 14. Zn(2+) contacts are provided by cysteine 11 and cysteine 14. A helical membrane pass occupies residues proline 73–isoleucine 92. Topologically, residues histidine 93–histidine 102 are extracellular. The helical transmembrane segment at leucine 103–leucine 124 threads the bilayer. Over arginine 125–glutamine 131 the chain is Cytoplasmic. A helical membrane pass occupies residues phenylalanine 132–alanine 151. At histidine 152–glutamate 154 the chain is on the extracellular side. Residues alanine 155 to alanine 174 traverse the membrane as a helical segment. Residues arginine 175–proline 308 are Cytoplasmic-facing. The helical transmembrane segment at alanine 309–glycine 327 threads the bilayer. Residues aspartate 328–tryptophan 332 lie on the Extracellular side of the membrane. The chain crosses the membrane as a helical span at residues isoleucine 333 to isoleucine 350. The Cytoplasmic segment spans residues serine 351 to arginine 630. The active-site 4-aspartylphosphate intermediate is the aspartate 388. The Mg(2+) site is built by aspartate 578 and aspartate 582. A helical transmembrane segment spans residues isoleucine 631–serine 652. Topologically, residues glycine 653–alanine 660 are extracellular. The chain crosses the membrane as a helical span at residues valine 661–methionine 676. At arginine 677 to isoleucine 681 the chain is on the cytoplasmic side.

Belongs to the cation transport ATPase (P-type) (TC 3.A.3) family. Type IB subfamily.

The protein localises to the cell membrane. The catalysed reaction is Zn(2+)(in) + ATP + H2O = Zn(2+)(out) + ADP + phosphate + H(+). It carries out the reaction Cd(2+)(in) + ATP + H2O = Cd(2+)(out) + ADP + phosphate + H(+). Functionally, couples the hydrolysis of ATP with the transport of cadmium, zinc and cobalt out of the cell. The chain is Cadmium, zinc and cobalt-transporting ATPase (cadA) from Helicobacter felis.